A 411-amino-acid polypeptide reads, in one-letter code: Common plant regulatory factor 1 (411 aa).

Over residues 1-14 the composition is skewed to basic and acidic residues; sequence MGNTDDVKAVKPEK. Disordered regions lie at residues 1–30, 130–197, and 232–293; these read MGNTDDVKAVKPEKLSSPPPPAAPDQSNSH, AMSI…SSVI, and SSLE…KQAE. Polar residues predominate over residues 148–164; it reads TLSQSKETEGSSDGSNE. The span at 235–244 shows a compositional bias: basic and acidic residues; sequence ELKDSPKEHA. A compositionally biased stretch (polar residues) spans 249 to 259; it reads AGGQQPSTMMP. Positions 264-293 are enriched in basic and acidic residues; the sequence is LHNDRDLKRERRKQSNRESARRSRLRKQAE. Positions 269 to 332 constitute a bZIP domain; that stretch reads DLKRERRKQS…EKLTNDNSRL (64 aa). Residues 271-290 form a basic motif region; the sequence is KRERRKQSNRESARRSRLRK. The tract at residues 297–332 is leucine-zipper; sequence LAIKVDSLTAENMALKAEINRLTLTAEKLTNDNSRL. The interval 346–411 is disordered; the sequence is DVGLGNNNEK…NPRTDAVAAG (66 aa).

This sequence belongs to the bZIP family. Binds DNA as a dimer.

The protein resides in the nucleus. Binds to the G-box-like motif (5'-ACGTGGC-3') of the chalcone synthase (CHS) gene promoter. G-box and G-box-like motifs are defined in promoters of certain plant genes which are regulated by such diverse stimuli as light-induction or hormone control. The protein is Common plant regulatory factor 1 (CPRF1) of Petroselinum crispum (Parsley).